The primary structure comprises 274 residues: Large ribosomal subunit protein uL2 (274 aa).

The disordered stretch occupies residues 223 to 256 (VAMNPVDHPHGGGEGRTSGGRHPVTPWGIPTKGY).

The protein belongs to the universal ribosomal protein uL2 family. As to quaternary structure, part of the 50S ribosomal subunit. Forms a bridge to the 30S subunit in the 70S ribosome.

Functionally, one of the primary rRNA binding proteins. Required for association of the 30S and 50S subunits to form the 70S ribosome, for tRNA binding and peptide bond formation. It has been suggested to have peptidyltransferase activity; this is somewhat controversial. Makes several contacts with the 16S rRNA in the 70S ribosome. The polypeptide is Large ribosomal subunit protein uL2 (Trichlorobacter lovleyi (strain ATCC BAA-1151 / DSM 17278 / SZ) (Geobacter lovleyi)).